We begin with the raw amino-acid sequence, 588 residues long: A-type ATP synthase subunit A 3 (588 aa).

An ATP-binding site is contributed by 234 to 241 (GPFGSGKT).

Belongs to the ATPase alpha/beta chains family. Has multiple subunits with at least A(3), B(3), C, D, E, F, H, I and proteolipid K(x).

The protein localises to the cell membrane. It catalyses the reaction ATP + H2O + 4 H(+)(in) = ADP + phosphate + 5 H(+)(out). In terms of biological role, component of the A-type ATP synthase that produces ATP from ADP in the presence of a proton gradient across the membrane. The A chain is the catalytic subunit. This Methanospirillum hungatei JF-1 (strain ATCC 27890 / DSM 864 / NBRC 100397 / JF-1) protein is A-type ATP synthase subunit A 3.